A 496-amino-acid chain; its full sequence is Angiopoietin-2 (496 aa).

Positions 1–18 (MWQIVFFTLSCDLVLAAA) are cleaved as a signal peptide. 6 N-linked (GlcNAc...) asparagine glycosylation sites follow: N89, N119, N133, N151, N240, and N304. Residues 166–248 (STNKLEKQIL…VNNSVLQKQQ (83 aa)) adopt a coiled-coil conformation. Residues 275–495 (KEEQISFRDC…ATTMMIRPAD (221 aa)) enclose the Fibrinogen C-terminal domain. Residues C284 and C313 are joined by a disulfide bond. Positions 429, 431, 433, and 435 each coordinate Ca(2+). 2 cysteine pairs are disulfide-bonded: C433–C435 and C437–C450.

Interacts with TEK/TIE2, competing for the same binding site as ANGPT1. Interacts with ITGA5. Interacts with SVEP1/polydom. Interacts with THBD; this interaction significantly inhibits the generation of activated PC and TAFIa/CPB2 by the thrombin/thrombomodulin complex.

The protein localises to the secreted. Its function is as follows. Binds to TEK/TIE2, competing for the ANGPT1 binding site, and modulating ANGPT1 signaling. Can induce tyrosine phosphorylation of TEK/TIE2 in the absence of ANGPT1. In the absence of angiogenic inducers, such as VEGF, ANGPT2-mediated loosening of cell-matrix contacts may induce endothelial cell apoptosis with consequent vascular regression. In concert with VEGF, it may facilitate endothelial cell migration and proliferation, thus serving as a permissive angiogenic signal. Involved in the regulation of lymphangiogenesis. This Homo sapiens (Human) protein is Angiopoietin-2 (ANGPT2).